A 196-amino-acid chain; its full sequence is Pyridoxal 5'-phosphate synthase subunit PdxT (196 aa).

Residue 47 to 49 (GES) coordinates L-glutamine. Catalysis depends on C79, which acts as the Nucleophile. L-glutamine contacts are provided by residues R106 and 134 to 135 (IR). Active-site charge relay system residues include H170 and E172.

This sequence belongs to the glutaminase PdxT/SNO family. As to quaternary structure, in the presence of PdxS, forms a dodecamer of heterodimers. Only shows activity in the heterodimer.

It carries out the reaction aldehydo-D-ribose 5-phosphate + D-glyceraldehyde 3-phosphate + L-glutamine = pyridoxal 5'-phosphate + L-glutamate + phosphate + 3 H2O + H(+). It catalyses the reaction L-glutamine + H2O = L-glutamate + NH4(+). It functions in the pathway cofactor biosynthesis; pyridoxal 5'-phosphate biosynthesis. In terms of biological role, catalyzes the hydrolysis of glutamine to glutamate and ammonia as part of the biosynthesis of pyridoxal 5'-phosphate. The resulting ammonia molecule is channeled to the active site of PdxS. This is Pyridoxal 5'-phosphate synthase subunit PdxT from Bacillus cereus (strain G9842).